We begin with the raw amino-acid sequence, 421 residues long: ATP-dependent RNA helicase RhlB (421 aa).

Residues 9–37 carry the Q motif motif; the sequence is QKFSDFALHPKVVEALEKKGFHNCTPIQA. Residues 40–219 form the Helicase ATP-binding domain; the sequence is LPLTLAGRDV…FEQMNNAEYI (180 aa). An ATP-binding site is contributed by 53-60; the sequence is AQTGTGKT. The short motif at 165-168 is the DEAD box element; sequence DEAD. Residues 245 to 390 form the Helicase C-terminal domain; the sequence is RLLQTLIEEE…VSKYNPDALM (146 aa). The segment at 392-421 is disordered; the sequence is DLPKPLRLTRPRTGNGPRRTGAPRNRRRSG. Residues 402 to 414 are compositionally biased toward low complexity; the sequence is PRTGNGPRRTGAP.

It belongs to the DEAD box helicase family. RhlB subfamily. Component of the RNA degradosome, which is a multiprotein complex involved in RNA processing and mRNA degradation.

The protein localises to the cytoplasm. It catalyses the reaction ATP + H2O = ADP + phosphate + H(+). DEAD-box RNA helicase involved in RNA degradation. Has RNA-dependent ATPase activity and unwinds double-stranded RNA. The chain is ATP-dependent RNA helicase RhlB from Escherichia coli O157:H7 (strain EC4115 / EHEC).